A 520-amino-acid polypeptide reads, in one-letter code: FAD-linked oxidoreductase OXR2 (520 aa).

Positions 1–23 (MKSFSLLASAGLATLASLPLTMA) are cleaved as a signal peptide. Asparagine 77, asparagine 220, asparagine 378, and asparagine 390 each carry an N-linked (GlcNAc...) asparagine glycan. The FAD-binding PCMH-type domain occupies 79 to 251 (SRPTIRLVVV…TSFQSKIYPR (173 aa)).

The protein belongs to the oxygen-dependent FAD-linked oxidoreductase family. The cofactor is FAD.

Its pathway is polyketide biosynthesis. Functionally, FAD-linked oxidoreductase; part of the gene cluster that mediates the biosynthesis of pyriculol and pyriculariol, two heptaketides that induce lesion formation upon application on rice leaves but are dispensable for pathogenicity. The highly reducing polyketide synthase synthesizes the heptaketide backbone of pyriculol and pyriculariol. Pyriculol and pyriculariol contain several hydroxyl moieties and double bonds, so it can be assumed that several reduction steps occur during biosynthesis. These reactions could be executed by PKS19 itself or partly by the tailoring enzymes OXR1, OXR2, RED1, RED2 or RED3, identified within the cluster. The FAD-linked oxidoreductase OXR1 is the only tailoring enzyme for which the function has been determined yet, and is involved in the oxidation of dihydropyriculol and dihydropyriculariol into pyriculol and pyriculariol, respectively. This is FAD-linked oxidoreductase OXR2 from Pyricularia oryzae (strain 70-15 / ATCC MYA-4617 / FGSC 8958) (Rice blast fungus).